Here is a 504-residue protein sequence, read N- to C-terminus: MSIRPEEISAILKEQIERYQSEVEVSNVGSVIYVGDGIARVYGLQGAMAGELLEFTGGTFGMVLNLEEDNVGAVLLGEYNHIKEGDVVKATGRIMEVPAGSAMLGRVVNALGQPIDGKGPINTTAFRPLEKVAHGVVTRQPVTTPMQTGLKAIDSMVPIGRGQRELIIGDRQIGKTAIALDSIINQREKKDLICIYVAVGQKQASIAGIAAKFEEMGAMDYTIIVAATASEPAPLLYMAPYAGVAMAEEFMEAEGKDVLIIYDDLSKHAVAYREMSLLLRRPPGREAYPGDVFYLHSRLLERACRLNPDHGGGSITALPIIETQAGDVSAYIPTNVISITDGQIYLEADMFNAGQRPAVNAGLSVSRVGGSAQTKAMKSVAGQLRLDLAQYRELAAFAQFGSDLDKATLARLTRGERVTEILKQGQYQPMPVQEQVVSIYSGVNGYLDDIPRDKVGEFEVDFLKFMRSANADVLNAIKDTGKIDDATEQKLIKAINEFKSTFAV.

Residue 169-176 (GDRQIGKT) participates in ATP binding.

It belongs to the ATPase alpha/beta chains family. In terms of assembly, F-type ATPases have 2 components, CF(1) - the catalytic core - and CF(0) - the membrane proton channel. CF(1) has five subunits: alpha(3), beta(3), gamma(1), delta(1), epsilon(1). CF(0) has three main subunits: a(1), b(2) and c(9-12). The alpha and beta chains form an alternating ring which encloses part of the gamma chain. CF(1) is attached to CF(0) by a central stalk formed by the gamma and epsilon chains, while a peripheral stalk is formed by the delta and b chains.

The protein resides in the cell membrane. It catalyses the reaction ATP + H2O + 4 H(+)(in) = ADP + phosphate + 5 H(+)(out). Functionally, produces ATP from ADP in the presence of a proton gradient across the membrane. The alpha chain is a regulatory subunit. This chain is ATP synthase subunit alpha, found in Syntrophomonas wolfei subsp. wolfei (strain DSM 2245B / Goettingen).